Consider the following 710-residue polypeptide: FAST kinase domain-containing protein 2, mitochondrial (710 aa).

Ser-126 and Ser-140 each carry phosphoserine. The RAP domain occupies 634–691 (VAVLCVSRSAYCLGSSHPRGFLAMKMRHLNAMGFHVILVNNWEMDKLEMEDAVTFLKT). The residue at position 708 (Ser-708) is a Phosphoserine.

This sequence belongs to the FAST kinase family. In terms of assembly, monomer. Found in a complex with GRSF1, DDX28, DHX30 and FASTKD5. Associates with the 16S mitochondrial rRNA (16S mt-rRNA). Forms a regulatory protein-RNA complex, consisting of RCC1L, NGRN, RPUSD3, RPUSD4, TRUB2, FASTKD2 and 16S mt-rRNA. As to expression, expression detected in spleen, thymus, testis, ovary, colon, heart, smooth muscle, kidney, brain, lung, liver and white adipose tissue with highest expression in heart, smooth muscle and thyroid.

It is found in the mitochondrion matrix. The protein localises to the mitochondrion nucleoid. Plays an important role in assembly of the mitochondrial large ribosomal subunit. As a component of a functional protein-RNA module, consisting of RCC1L, NGRN, RPUSD3, RPUSD4, TRUB2, FASTKD2 and 16S mitochondrial ribosomal RNA (16S mt-rRNA), controls 16S mt-rRNA abundance and is required for intra-mitochondrial translation. May play a role in mitochondrial apoptosis. The chain is FAST kinase domain-containing protein 2, mitochondrial from Homo sapiens (Human).